The primary structure comprises 187 residues: Adenine phosphoribosyltransferase (187 aa).

This sequence belongs to the purine/pyrimidine phosphoribosyltransferase family. Homodimer.

The protein resides in the cytoplasm. It carries out the reaction AMP + diphosphate = 5-phospho-alpha-D-ribose 1-diphosphate + adenine. The protein operates within purine metabolism; AMP biosynthesis via salvage pathway; AMP from adenine: step 1/1. Catalyzes a salvage reaction resulting in the formation of AMP, that is energically less costly than de novo synthesis. This chain is Adenine phosphoribosyltransferase, found in Burkholderia pseudomallei (strain 668).